Reading from the N-terminus, the 734-residue chain is MALRFPRFSQGLAQDPTTRRIWFGIATAHDFESHDDITEERLYQNIFASHFGQLAIIFLWTSGNLFHVAWQGNFETWVQDPLHVRPIAHAIWDPHFGQPAVEAFTRGGALGPVNIAYSGVYQWWYTIGLRTNEDLYTGALFLLFLSALSLIGGWLHLQPKWKPRVSWFKNAESRLNHHLSGLFGVSSLAWTGHLVHVAIPASRGEYVRWNNFLNVLPHPQGLGPLFTGQWNLYAQNPDSSSHLFGTSQGSGTAILTLLGGFHPQTQSLWLTDMAHHHLAIAILFLIAGHMYRTNFGIGHSIKDLLEAHIPPGGRLGRGHKGLYDTINNSIHFQLGLALASLGVITSLVAQHMYSLPAYAFIAQDFTTQAALYTHHQYIAGFIMTGAFAHGAIFFIRDYNPEQNEDNVLARMLDHKEAIISHLSWASLFLGFHTLGLYVHNDVMLAFGTPEKQILIEPIFAQWIQSAHGKTSYGFDVLLSSTSGPAFNAGRSIWLPGWLNAINENSNSLFLTIGPGDFLVHHAIALGLHTTTLILVKGALDARGSKLMPDKKDFGYSFPCDGPGRGGTCDISAWDAFYLAVFWMLNTIGWVTFYWHWKHITLWQGNVSQFNESSTYLMGWLRDYLWLNSSQLINGYNPFGMNSLSVWAWMFLFGHLVWATGFMFLISWRGYWQELIETLAWAHERTPLANLIRWKDKPVALSIVQARLVGLAHFSVGYIFTYAAFLIASTSGKFG.

Helical transmembrane passes span 46–69 (IFAS…FHVA), 135–158 (LYTG…LHLQ), 175–199 (LNHH…HVAI), 273–291 (MAHH…GHMY), 330–353 (IHFQ…QHMY), 369–395 (AALY…IFFI), 417–439 (AIIS…LYVH), and 517–535 (FLVH…LILV). The [4Fe-4S] cluster site is built by C559 and C568. 2 helical membrane passes run 575-596 (AFYL…YWHW) and 643-665 (LSVW…MFLI). 3 residues coordinate chlorophyll a: H654, M662, and Y670. W671 lines the phylloquinone pocket. A helical transmembrane segment spans residues 707–727 (LVGLAHFSVGYIFTYAAFLIA).

This sequence belongs to the PsaA/PsaB family. As to quaternary structure, the PsaA/B heterodimer binds the P700 chlorophyll special pair and subsequent electron acceptors. PSI consists of a core antenna complex that captures photons, and an electron transfer chain that converts photonic excitation into a charge separation. The eukaryotic PSI reaction center is composed of at least 11 subunits. P700 is a chlorophyll a/chlorophyll a' dimer, A0 is one or more chlorophyll a, A1 is one or both phylloquinones and FX is a shared 4Fe-4S iron-sulfur center. serves as cofactor.

The protein localises to the plastid. It is found in the chloroplast thylakoid membrane. It carries out the reaction reduced [plastocyanin] + hnu + oxidized [2Fe-2S]-[ferredoxin] = oxidized [plastocyanin] + reduced [2Fe-2S]-[ferredoxin]. PsaA and PsaB bind P700, the primary electron donor of photosystem I (PSI), as well as the electron acceptors A0, A1 and FX. PSI is a plastocyanin-ferredoxin oxidoreductase, converting photonic excitation into a charge separation, which transfers an electron from the donor P700 chlorophyll pair to the spectroscopically characterized acceptors A0, A1, FX, FA and FB in turn. Oxidized P700 is reduced on the lumenal side of the thylakoid membrane by plastocyanin. This Arabidopsis thaliana (Mouse-ear cress) protein is Photosystem I P700 chlorophyll a apoprotein A2.